Reading from the N-terminus, the 111-residue chain is Ribonuclease P protein component 1 (111 aa).

Belongs to the eukaryotic/archaeal RNase P protein component 1 family. Consists of a catalytic RNA component and at least 4-5 protein subunits.

Its subcellular location is the cytoplasm. It carries out the reaction Endonucleolytic cleavage of RNA, removing 5'-extranucleotides from tRNA precursor.. Part of ribonuclease P, a protein complex that generates mature tRNA molecules by cleaving their 5'-ends. The polypeptide is Ribonuclease P protein component 1 (Hyperthermus butylicus (strain DSM 5456 / JCM 9403 / PLM1-5)).